The following is a 347-amino-acid chain: 4-hydroxy-2-oxovalerate aldolase (347 aa).

Residues 2 to 252 enclose the Pyruvate carboxyltransferase domain; sequence ILISDATLRD…DTRTTFEHVM (251 aa). A substrate-binding site is contributed by 10–11; sequence RD. Residue Asp11 participates in Mn(2+) binding. The Proton acceptor role is filled by His14. Residues Ser164 and His191 each contribute to the substrate site. The Mn(2+) site is built by His191 and His193.

This sequence belongs to the 4-hydroxy-2-oxovalerate aldolase family.

It carries out the reaction (S)-4-hydroxy-2-oxopentanoate = acetaldehyde + pyruvate. This Burkholderia thailandensis (strain ATCC 700388 / DSM 13276 / CCUG 48851 / CIP 106301 / E264) protein is 4-hydroxy-2-oxovalerate aldolase (mhpE).